A 270-amino-acid chain; its full sequence is 5'-AMP-activated protein kinase subunit beta-1 (270 aa).

The segment at 1 to 44 is disordered; sequence MGNTSSERAALDRQGGHKTPRRDSSGGSKDGDRPKILMDSPEDA. The N-myristoyl glycine moiety is linked to residue Gly2. The residue at position 4 (Thr4) is a Phosphothreonine. Ser5 and Ser6 each carry phosphoserine. A compositionally biased stretch (basic and acidic residues) spans 9–36; sequence AALDRQGGHKTPRRDSSGGSKDGDRPKI. Thr19 bears the Phosphothreonine mark. Phosphoserine; by autocatalysis occurs at positions 24 and 25. A phosphoserine mark is found at Ser40, Ser96, and Ser101. The tract at residues 68–163 is glycogen-binding domain; that stretch reads EVNDKAPAQA…QVKKTDFEVF (96 aa). Ser108 carries the phosphoserine; by autocatalysis modification. Phosphothreonine is present on Thr148. Ser182 carries the post-translational modification Phosphoserine. N6-succinyllysine is present on Lys201.

Belongs to the 5'-AMP-activated protein kinase beta subunit family. AMPK is a heterotrimer of an alpha catalytic subunit (PRKAA1 or PRKAA2), a beta (PRKAB1 or PRKAB2) and a gamma non-catalytic subunits (PRKAG1, PRKAG2 or PRKAG3). Interacts with FNIP1 and FNIP2. In terms of processing, phosphorylated when associated with the catalytic subunit (PRKAA1 or PRKAA2). Phosphorylated by ULK1; leading to negatively regulate AMPK activity and suggesting the existence of a regulatory feedback loop between ULK1 and AMPK.

Non-catalytic subunit of AMP-activated protein kinase (AMPK), an energy sensor protein kinase that plays a key role in regulating cellular energy metabolism. In response to reduction of intracellular ATP levels, AMPK activates energy-producing pathways and inhibits energy-consuming processes: inhibits protein, carbohydrate and lipid biosynthesis, as well as cell growth and proliferation. AMPK acts via direct phosphorylation of metabolic enzymes, and by longer-term effects via phosphorylation of transcription regulators. Also acts as a regulator of cellular polarity by remodeling the actin cytoskeleton; probably by indirectly activating myosin. Beta non-catalytic subunit acts as a scaffold on which the AMPK complex assembles, via its C-terminus that bridges alpha (PRKAA1 or PRKAA2) and gamma subunits (PRKAG1, PRKAG2 or PRKAG3). This is 5'-AMP-activated protein kinase subunit beta-1 (PRKAB1) from Bos taurus (Bovine).